A 444-amino-acid chain; its full sequence is Argininosuccinate synthase (444 aa).

ATP contacts are provided by residues 18 to 26 (AFSGGLDTS) and A44. Y100 is a binding site for L-citrulline. The ATP site is built by G130 and T132. L-aspartate-binding residues include T132, N136, and D137. Residue N136 coordinates L-citrulline. ATP is bound at residue D137. L-citrulline is bound by residues R140 and S193. ATP is bound at residue D195. T202, E204, and E281 together coordinate L-citrulline.

It belongs to the argininosuccinate synthase family. Type 2 subfamily. As to quaternary structure, homotetramer.

It is found in the cytoplasm. The enzyme catalyses L-citrulline + L-aspartate + ATP = 2-(N(omega)-L-arginino)succinate + AMP + diphosphate + H(+). The protein operates within amino-acid biosynthesis; L-arginine biosynthesis; L-arginine from L-ornithine and carbamoyl phosphate: step 2/3. The polypeptide is Argininosuccinate synthase (Histophilus somni (strain 129Pt) (Haemophilus somnus)).